Here is a 191-residue protein sequence, read N- to C-terminus: MIRITDAAQEHFAKLLSNQEPGTQIRVFVINPGTPNAECGVSYCPPDAVEATDTELKFDKISAYVDELSAPYLQDAEIDFVTDKLGSQLTLKAPNAKMRKVSDEAPLIERVEYLLQSQINPQLAGHGGQVTLMEITDDMLAILQFGGGCNGCSMVDYTLKEGIEKELLEKFPELKGVRDLTEHQRGEHSYY.

C149 and C152 together coordinate [4Fe-4S] cluster.

It belongs to the NfuA family. As to quaternary structure, homodimer. The cofactor is [4Fe-4S] cluster.

In terms of biological role, involved in iron-sulfur cluster biogenesis. Binds a 4Fe-4S cluster, can transfer this cluster to apoproteins, and thereby intervenes in the maturation of Fe/S proteins. Could also act as a scaffold/chaperone for damaged Fe/S proteins. The chain is Fe/S biogenesis protein NfuA from Sodalis glossinidius (strain morsitans).